Consider the following 337-residue polypeptide: MDAFKTHLAIVASGAPLSREQARAAFDDLLSGEVTPIQAGAFLTALSVRGESEDEIVGAVSAMRARMLPVAAPEGAIDIVGTGGDHSGSYNVSTLAAILTAACGVPVAKHGNRAATSRSGAADVLAALGVKIGLPPEALARCLSEAGLCFMFAQTHHGAMRHVAPVRTELPFRTIFNMLGPLSNPAGVTAQVFGVSRPAWAEPLTRVLATLGSRRVWTVHGSDGLDEITTTGPTAVVALEDGAFRHFTLDPREVSLPLATLDDLRGGDPEHNAAALGAVLEGARNAYRDIAVLNAGAGLVVAGAAGSLAEGVARAQEAIDSGAARGTLARLVAVSNA.

5-phospho-alpha-D-ribose 1-diphosphate-binding positions include glycine 81, 84-85 (GD), serine 89, 91-94 (NVST), 109-117 (KHGNRAATS), and alanine 121. Glycine 81 is a binding site for anthranilate. Serine 93 is a binding site for Mg(2+). Asparagine 112 serves as a coordination point for anthranilate. Anthranilate is bound at residue arginine 167. Mg(2+)-binding residues include aspartate 226 and glutamate 227.

Belongs to the anthranilate phosphoribosyltransferase family. In terms of assembly, homodimer. Mg(2+) serves as cofactor.

The catalysed reaction is N-(5-phospho-beta-D-ribosyl)anthranilate + diphosphate = 5-phospho-alpha-D-ribose 1-diphosphate + anthranilate. It participates in amino-acid biosynthesis; L-tryptophan biosynthesis; L-tryptophan from chorismate: step 2/5. Functionally, catalyzes the transfer of the phosphoribosyl group of 5-phosphorylribose-1-pyrophosphate (PRPP) to anthranilate to yield N-(5'-phosphoribosyl)-anthranilate (PRA). The sequence is that of Anthranilate phosphoribosyltransferase from Methylorubrum extorquens (strain CM4 / NCIMB 13688) (Methylobacterium extorquens).